Reading from the N-terminus, the 81-residue chain is UPF0434 protein msl4429 (81 aa).

It belongs to the UPF0434 family.

The sequence is that of UPF0434 protein msl4429 from Mesorhizobium japonicum (strain LMG 29417 / CECT 9101 / MAFF 303099) (Mesorhizobium loti (strain MAFF 303099)).